The chain runs to 417 residues: Serine hydroxymethyltransferase 2 (417 aa).

Residues Leu-121 and 125-127 (GHL) each bind (6S)-5,6,7,8-tetrahydrofolate. N6-(pyridoxal phosphate)lysine is present on Lys-230. 355–357 (SPF) lines the (6S)-5,6,7,8-tetrahydrofolate pocket.

The protein belongs to the SHMT family. Homodimer. Pyridoxal 5'-phosphate serves as cofactor.

The protein localises to the cytoplasm. The enzyme catalyses (6R)-5,10-methylene-5,6,7,8-tetrahydrofolate + glycine + H2O = (6S)-5,6,7,8-tetrahydrofolate + L-serine. It participates in one-carbon metabolism; tetrahydrofolate interconversion. Its pathway is amino-acid biosynthesis; glycine biosynthesis; glycine from L-serine: step 1/1. Its function is as follows. Catalyzes the reversible interconversion of serine and glycine with tetrahydrofolate (THF) serving as the one-carbon carrier. This reaction serves as the major source of one-carbon groups required for the biosynthesis of purines, thymidylate, methionine, and other important biomolecules. Also exhibits THF-independent aldolase activity toward beta-hydroxyamino acids, producing glycine and aldehydes, via a retro-aldol mechanism. The chain is Serine hydroxymethyltransferase 2 from Pseudomonas syringae pv. syringae (strain B728a).